The following is a 97-amino-acid chain: MSSAPEPPAFKKEPPKEKDLGNIGLRGVRTTTLFRAVNPELFIKPNKPVMAFGLITISLCVAYIGYLHATQENKKDLYEAIDSEGHSYMRRKTSKWD.

Residues 1-22 (MSSAPEPPAFKKEPPKEKDLGN) form a disordered region. Basic and acidic residues predominate over residues 9-20 (AFKKEPPKEKDL). The chain crosses the membrane as a helical span at residues 48-70 (PVMAFGLITISLCVAYIGYLHAT).

This sequence belongs to the SMIM8 family.

The protein localises to the membrane. In Bos taurus (Bovine), this protein is Small integral membrane protein 8 (SMIM8).